Consider the following 115-residue polypeptide: Large ribosomal subunit protein bL20 (115 aa).

It belongs to the bacterial ribosomal protein bL20 family.

Its function is as follows. Binds directly to 23S ribosomal RNA and is necessary for the in vitro assembly process of the 50S ribosomal subunit. It is not involved in the protein synthesizing functions of that subunit. The chain is Large ribosomal subunit protein bL20 from Salinibacter ruber (strain DSM 13855 / M31).